Here is a 1420-residue protein sequence, read N- to C-terminus: DNA-directed RNA polymerase subunit beta'' (1420 aa).

Cysteine 220, cysteine 295, cysteine 302, and cysteine 305 together coordinate Zn(2+).

This sequence belongs to the RNA polymerase beta' chain family. RpoC2 subfamily. As to quaternary structure, in plastids the minimal PEP RNA polymerase catalytic core is composed of four subunits: alpha, beta, beta', and beta''. When a (nuclear-encoded) sigma factor is associated with the core the holoenzyme is formed, which can initiate transcription. Requires Zn(2+) as cofactor.

The protein localises to the plastid. The protein resides in the chloroplast. The catalysed reaction is RNA(n) + a ribonucleoside 5'-triphosphate = RNA(n+1) + diphosphate. Functionally, DNA-dependent RNA polymerase catalyzes the transcription of DNA into RNA using the four ribonucleoside triphosphates as substrates. This is DNA-directed RNA polymerase subunit beta'' from Adiantum capillus-veneris (Maidenhair fern).